Here is a 413-residue protein sequence, read N- to C-terminus: Protein CDKN2AIP homolog B (413 aa).

Residues 21–118 (LERVRGQCES…TTRDELVAKV (98 aa)) form the XRN2-binding (XTBD) domain. The tract at residues 118–266 (VKKRGNSSSN…PTRRFTTEHT (149 aa)) is disordered. Positions 183-193 (NKREAHSRTDV) are enriched in basic and acidic residues.

This sequence belongs to the CARF family.

Its subcellular location is the nucleus. It is found in the nucleoplasm. May regulate DNA damage response and cell proliferation. This chain is Protein CDKN2AIP homolog B (cdkn2aip-b), found in Xenopus laevis (African clawed frog).